The following is a 308-amino-acid chain: 4-hydroxy-3-methylbut-2-enyl diphosphate reductase (308 aa).

C12 is a binding site for [4Fe-4S] cluster. Positions 43 and 77 each coordinate (2E)-4-hydroxy-3-methylbut-2-enyl diphosphate. Residues H43 and H77 each contribute to the dimethylallyl diphosphate site. 2 residues coordinate isopentenyl diphosphate: H43 and H77. C99 lines the [4Fe-4S] cluster pocket. Position 127 (H127) interacts with (2E)-4-hydroxy-3-methylbut-2-enyl diphosphate. H127 lines the dimethylallyl diphosphate pocket. H127 serves as a coordination point for isopentenyl diphosphate. E129 functions as the Proton donor in the catalytic mechanism. T167 contacts (2E)-4-hydroxy-3-methylbut-2-enyl diphosphate. C197 provides a ligand contact to [4Fe-4S] cluster. (2E)-4-hydroxy-3-methylbut-2-enyl diphosphate is bound by residues S225, S226, N227, and S269. Dimethylallyl diphosphate is bound by residues S225, S226, N227, and S269. Residues S225, S226, N227, and S269 each contribute to the isopentenyl diphosphate site.

Belongs to the IspH family. The cofactor is [4Fe-4S] cluster.

The enzyme catalyses isopentenyl diphosphate + 2 oxidized [2Fe-2S]-[ferredoxin] + H2O = (2E)-4-hydroxy-3-methylbut-2-enyl diphosphate + 2 reduced [2Fe-2S]-[ferredoxin] + 2 H(+). The catalysed reaction is dimethylallyl diphosphate + 2 oxidized [2Fe-2S]-[ferredoxin] + H2O = (2E)-4-hydroxy-3-methylbut-2-enyl diphosphate + 2 reduced [2Fe-2S]-[ferredoxin] + 2 H(+). It participates in isoprenoid biosynthesis; dimethylallyl diphosphate biosynthesis; dimethylallyl diphosphate from (2E)-4-hydroxy-3-methylbutenyl diphosphate: step 1/1. It functions in the pathway isoprenoid biosynthesis; isopentenyl diphosphate biosynthesis via DXP pathway; isopentenyl diphosphate from 1-deoxy-D-xylulose 5-phosphate: step 6/6. Catalyzes the conversion of 1-hydroxy-2-methyl-2-(E)-butenyl 4-diphosphate (HMBPP) into a mixture of isopentenyl diphosphate (IPP) and dimethylallyl diphosphate (DMAPP). Acts in the terminal step of the DOXP/MEP pathway for isoprenoid precursor biosynthesis. This chain is 4-hydroxy-3-methylbut-2-enyl diphosphate reductase, found in Wolbachia pipientis subsp. Culex pipiens (strain wPip).